The following is a 729-amino-acid chain: Serine/threonine-protein kinase TBK1 (729 aa).

The Protein kinase domain maps to 9 to 310; the sequence is WLLSDILGQG…ETSDILHRMV (302 aa). An ATP-binding site is contributed by 15-23; the sequence is LGQGATANV. Lys-30 is covalently cross-linked (Glycyl lysine isopeptide (Lys-Gly) (interchain with G-Cter in ubiquitin)). Residue Lys-38 coordinates ATP. Asp-135 (proton acceptor) is an active-site residue. Ser-172 is subject to Phosphoserine; by autocatalysis and IKKB. A Ubiquitin-like domain is found at 309–385; the sequence is MVIHVFSLQQ…ENPIFVVSRE (77 aa). A Glycyl lysine isopeptide (Lys-Gly) (interchain with G-Cter in ubiquitin) cross-link involves residue Lys-401. Coiled coils occupy residues 407–657 and 658–713; these read DLDG…LQET and LPQK…ILER. N6-methyllysine; by SETD4 is present on Lys-607. Residues 621–729 are interaction with AZI2, TANK and TBKBP1; the sequence is RKMLHLRKQL…DGGLRNVDCL (109 aa). Lys-670 is covalently cross-linked (Glycyl lysine isopeptide (Lys-Gly) (interchain with G-Cter in ubiquitin)). Position 716 is a phosphoserine (Ser-716).

Belongs to the protein kinase superfamily. Ser/Thr protein kinase family. I-kappa-B kinase subfamily. Homodimer. Interacts with DDX3X, TIRAP and TRAF2. Part of a ternary complex consisting of TANK, TRAF2 and TBK1. Interacts with AZI2, TANK and TBKBP1; these interactions are mutually exclusive and mediate TBK1 activation. Interacts with GSK3B; this interaction promotes TBK1 self-association and autophosphorylation. Interacts with SIKE1; SIKE1 is associated with TBK1 under physiological condition and dissociated from TBK1 upon viral infection or TLR3 stimulation. Interacts with IRF3, leading to IRF3 phosphorylation. Interacts with RIGI. Interacts with CYLD. Interacts with OPTN and TRAF3. Interacts with SRC. Interacts with the exocyst complex subunit SEC5/EXOC2; this interaction is sufficient to trigger TBK1 activity. Interacts with STING1, leading to STING1 phosphorylation. Interacts with IFIT3 (via N-terminus). Interacts with MAVS; interaction only takes place in the presence of IFIT3 and leads to MAVS phosphorylation. Interacts (via protein kinase domain) with TTLL12 (via TTL domain); the interaction prevents MAVS binding to TBK1. Interacts with TICAM1; this interaction is enhanced in the presence of WDFY1 and leads to TICAM1 phosphorylation. Interacts with TRIM26. Interacts with TRIM23. Interacts with TTC4 and IKBKE. Interacts with HNRNPA2B1. Interacts with DDX3X. Interacts with TRIM14. Interacts with CEP170; efficient complex formation may be dependent on the presence of CCDC61. Interacts with TRAF3IP3. Interacts with HSP90AA1; the interaction mediates TBK1 association with TOMM70. Interacts with TAX1BP1. Interacts with kinase IKBKB; the complex interacts with STAT1, leading to phosphorylation of STAT1 on 'Thr-749' by IKBKB. Interacts with ICOS; this interaction is critical for the maturation of T follicular regulatory cells. Interacts with RNF144B; this interaction prevents TBK1 phosphorylation and subsequent activation. Interacts with ASB8; this interaction promotes TBK1 proteasomal degradation. Forms a ternary complex with ZNF268 and SETD4; the interaction with SETD4 is ZNF268-dependent and leads to TBK1 monomethylation, which enhances its interaction with IRF3 and MAVS. In terms of assembly, (Microbial infection) Interacts with Borna disease virus (BDV) P protein leading to its phosphorylation. As to quaternary structure, (Microbial infection) Interacts with Ebola virus protein VP35. (Microbial infection) Interacts with HCV NS3; this interaction leads to inhibition of cellular antiviral response by blocking necessary interactions between the TBK1 and its substrates IRF3 and IRF7. In terms of assembly, (Microbial infection) Interacts with human herpesvirus 1 protein ICP34.5. As to quaternary structure, (Microbial infection) Interacts with Zika virus non-structural protein 1/NS1 and non-structural protein 4B/NS4B. (Microbial infection) Interacts with SARS-CoV-2 non-structural protein 6; this interaction decreases IRF3 phosphorylation by 57%, which leads to reduced IFN-beta (IFNB) production. Interacts with SARS-CoV-2 helicase; this interaction inhibits TBK1 phosphorylation and decreases IRF3 phosphorylation by 75%, which leads to reduced IFN-beta production. Interacts with SARS-CoV-2 M protein; the interaction promotes TBK1 degradation via 'Lys-48'-linked ubiquitination. In terms of assembly, (Microbial infection) Interacts with human cytomegalovirus protein UL35; this interaction inhibits type I interferon production. As to quaternary structure, (Microbial infection) Interacts with heartland virus NSs; this interaction antagonizes TBK1 phosphorylation and inhibits TBK1-IRF3 interaction and thus the establishment of an antiviral state. (Microbial infection) Interacts (via N-terminus) with Severe fever with thrombocytopenia virus (SFTSV) NSs; this interaction antagonizes TBK1 phosphorylation and sequesters TBK1 in NSs-induced cytoplasmic inclusion bodies thereby inhibiting the IFN responses. In terms of processing, autophosphorylation at Ser-172 activates the kinase, and is an essential step for virus-triggered signaling. Phosphorylated by IKBKB/IKKB at Ser-172. Phosphorylation requires homodimerization and ubiquitination at Lys-30 and Lys-401. Dephosphorylated at Ser-172 by PPM1B and this negatively regulates its role in mediating antiviral response. Post-translationally, 'Lys-63'-linked polyubiquitination by MIB1 after RNA virus infection, or by NRDP1 after LPS stimulation at Lys-30 and Lys-401, participates in kinase activation. 'Lys-48'-linked polyubiquitination at Lys-670 by DTX4 leads to proteasomal degradation. 'Lys-48'-linked polyubiquitination by TRAIP also leads to proteasomal degradation. 'Lys-48'-linked polyubiquitination by TRAF7; leading to proteasomal degradation. 'Lys-63'-linked polyubiquitination by RNF128 at Lys-30 and Lys-401 leads to the activation of antiviral responses. 'Lys-48'-linked polyubiquitination after 'lys-33'-linked deubiquitination by USP38 promotes TBK1 degradation. (Microbial infection) Interaction with SARS-CoV-2 M protein induces 'Lys-48'-linked ubiquitination which leads to proteasomal degradation. In terms of processing, (Microbial infection) Deubiquitinated by Epstein-Barr virus BPLF1 on both 'Lys-48' and 'Lys-63'-linked ubiquitin chains; leading to inhibition of type I interfewron production. Post-translationally, monomethylation at Lys-607 by SETD4 maximizes TBK1 activation and promotes efficient interferon signaling. Ubiquitous with higher expression in testis. Expressed in the ganglion cells, nerve fiber layer and microvasculature of the retina.

The protein localises to the cytoplasm. The catalysed reaction is L-seryl-[protein] + ATP = O-phospho-L-seryl-[protein] + ADP + H(+). It catalyses the reaction L-threonyl-[protein] + ATP = O-phospho-L-threonyl-[protein] + ADP + H(+). Functionally, serine/threonine kinase that plays an essential role in regulating inflammatory responses to foreign agents. Following activation of toll-like receptors by viral or bacterial components, associates with TRAF3 and TANK and phosphorylates interferon regulatory factors (IRFs) IRF3 and IRF7 as well as DDX3X. This activity allows subsequent homodimerization and nuclear translocation of the IRFs leading to transcriptional activation of pro-inflammatory and antiviral genes including IFNA and IFNB. In order to establish such an antiviral state, TBK1 form several different complexes whose composition depends on the type of cell and cellular stimuli. Plays a key role in IRF3 activation: acts by first phosphorylating innate adapter proteins MAVS, STING1 and TICAM1 on their pLxIS motif, leading to recruitment of IRF3, thereby licensing IRF3 for phosphorylation by TBK1. Phosphorylated IRF3 dissociates from the adapter proteins, dimerizes, and then enters the nucleus to induce expression of interferons. Thus, several scaffolding molecules including FADD, TRADD, MAVS, AZI2, TANK or TBKBP1/SINTBAD can be recruited to the TBK1-containing-complexes. Under particular conditions, functions as a NF-kappa-B effector by phosphorylating NF-kappa-B inhibitor alpha/NFKBIA, IKBKB or RELA to translocate NF-Kappa-B to the nucleus. Restricts bacterial proliferation by phosphorylating the autophagy receptor OPTN/Optineurin on 'Ser-177', thus enhancing LC3 binding affinity and antibacterial autophagy. Phosphorylates SMCR8 component of the C9orf72-SMCR8 complex, promoting autophagosome maturation. Phosphorylates ATG8 proteins MAP1LC3C and GABARAPL2, thereby preventing their delipidation and premature removal from nascent autophagosomes. Seems to play a role in energy balance regulation by sustaining a state of chronic, low-grade inflammation in obesity, which leads to a negative impact on insulin sensitivity. Attenuates retroviral budding by phosphorylating the endosomal sorting complex required for transport-I (ESCRT-I) subunit VPS37C. Phosphorylates Borna disease virus (BDV) P protein. Plays an essential role in the TLR3- and IFN-dependent control of herpes virus HSV-1 and HSV-2 infections in the central nervous system. Acts both as a positive and negative regulator of the mTORC1 complex, depending on the context: activates mTORC1 in response to growth factors by catalyzing phosphorylation of MTOR, while it limits the mTORC1 complex by promoting phosphorylation of RPTOR. Acts as a positive regulator of the mTORC2 complex by mediating phosphorylation of MTOR, leading to increased phosphorylation and activation of AKT1. Phosphorylates and activates AKT1. Involved in the regulation of TNF-induced RIPK1-mediated cell death, probably acting via CYLD phosphorylation that in turn controls RIPK1 ubiquitination status. Also participates in the differentiation of T follicular regulatory cells together with the receptor ICOS. This chain is Serine/threonine-protein kinase TBK1, found in Homo sapiens (Human).